A 630-amino-acid chain; its full sequence is Ubiquitin-like modifier-activating enzyme ATG7 (630 aa).

A GXGXXG motif motif is present at residues 331–336 (GAGTLG). The active-site Glycyl thioester intermediate is the cysteine 507. Residues 591-630 (ALEHPLYLEEISGLSVIKQEVERLGNDVFEWEDDESDEIA) form a homodimerization region.

It belongs to the ATG7 family. As to quaternary structure, homodimer; homodimerization is required for ATP-binding. Interacts with ATG8 through a thioester bond between Cys-507 and the C-terminal 'Gly-116' of ATG8 and with ATG12 through a thioester bond between Cys-507 and the C-terminal 'Gly-186' of ATG12. Also interacts with ATG3.

The protein resides in the cytoplasm. The protein localises to the preautophagosomal structure. Its function is as follows. E1-like activating enzyme involved in the 2 ubiquitin-like systems required for cytoplasm to vacuole transport (Cvt) and autophagy. Activates ATG12 for its conjugation with ATG5 and ATG8 for its conjugation with phosphatidylethanolamine. Both systems are needed for the ATG8 association to Cvt vesicles and autophagosomes membranes. Autophagy is essential for maintenance of amino acid levels and protein synthesis under nitrogen starvation. Required for selective autophagic degradation of the nucleus (nucleophagy) as well as for mitophagy which contributes to regulate mitochondrial quantity and quality by eliminating the mitochondria to a basal level to fulfill cellular energy requirements and preventing excess ROS production. Plays a role in the regulation of filamentous growth and chronological longevity. The protein is Ubiquitin-like modifier-activating enzyme ATG7 (ATG7) of Saccharomyces cerevisiae (strain ATCC 204508 / S288c) (Baker's yeast).